The following is a 256-amino-acid chain: Triosephosphate isomerase (256 aa).

12 to 14 (NWK) contacts substrate. His99 functions as the Electrophile in the catalytic mechanism. The active-site Proton acceptor is Glu169. Substrate-binding positions include Gly175, Ser214, and 235-236 (GG).

It belongs to the triosephosphate isomerase family. As to quaternary structure, homodimer.

It is found in the cytoplasm. The catalysed reaction is D-glyceraldehyde 3-phosphate = dihydroxyacetone phosphate. It participates in carbohydrate biosynthesis; gluconeogenesis. The protein operates within carbohydrate degradation; glycolysis; D-glyceraldehyde 3-phosphate from glycerone phosphate: step 1/1. In terms of biological role, involved in the gluconeogenesis. Catalyzes stereospecifically the conversion of dihydroxyacetone phosphate (DHAP) to D-glyceraldehyde-3-phosphate (G3P). This Rhizobium meliloti (strain 1021) (Ensifer meliloti) protein is Triosephosphate isomerase.